We begin with the raw amino-acid sequence, 261 residues long: Ribosomal RNA small subunit methyltransferase J (261 aa).

S-adenosyl-L-methionine is bound by residues 109-110, 125-126, and Asp-179; these read RD and ER.

This sequence belongs to the methyltransferase superfamily. RsmJ family.

It localises to the cytoplasm. It carries out the reaction guanosine(1516) in 16S rRNA + S-adenosyl-L-methionine = N(2)-methylguanosine(1516) in 16S rRNA + S-adenosyl-L-homocysteine + H(+). Functionally, specifically methylates the guanosine in position 1516 of 16S rRNA. This Pseudomonas aeruginosa (strain ATCC 15692 / DSM 22644 / CIP 104116 / JCM 14847 / LMG 12228 / 1C / PRS 101 / PAO1) protein is Ribosomal RNA small subunit methyltransferase J.